A 296-amino-acid chain; its full sequence is Small ribosomal subunit biogenesis GTPase RsgA (296 aa).

Residues T65 to L226 form the CP-type G domain. Residues T114 to D117 and G169 to S177 contribute to the GTP site. Zn(2+) contacts are provided by C250, C255, H257, and C263.

This sequence belongs to the TRAFAC class YlqF/YawG GTPase family. RsgA subfamily. Monomer. Associates with 30S ribosomal subunit, binds 16S rRNA. It depends on Zn(2+) as a cofactor.

The protein localises to the cytoplasm. One of several proteins that assist in the late maturation steps of the functional core of the 30S ribosomal subunit. Helps release RbfA from mature subunits. May play a role in the assembly of ribosomal proteins into the subunit. Circularly permuted GTPase that catalyzes slow GTP hydrolysis, GTPase activity is stimulated by the 30S ribosomal subunit. This is Small ribosomal subunit biogenesis GTPase RsgA from Bacillus velezensis (strain DSM 23117 / BGSC 10A6 / LMG 26770 / FZB42) (Bacillus amyloliquefaciens subsp. plantarum).